A 96-amino-acid chain; its full sequence is Large ribosomal subunit protein bL28 (96 aa).

The protein belongs to the bacterial ribosomal protein bL28 family.

This Parvibaculum lavamentivorans (strain DS-1 / DSM 13023 / NCIMB 13966) protein is Large ribosomal subunit protein bL28.